A 166-amino-acid polypeptide reads, in one-letter code: Ribonuclease H (166 aa).

The RNase H type-1 domain occupies 5–147; that stretch reads PRKRVALFTD…VDREARRQAQ (143 aa). Mg(2+) contacts are provided by D14, E52, D74, and D139. Residues 128–166 form a disordered region; sequence GHTGHPENERVDREARRQAQSQAKTPCPPQAPTLFHEEA. Residues 131 to 144 show a composition bias toward basic and acidic residues; it reads GHPENERVDREARR.

This sequence belongs to the RNase H family. In terms of assembly, monomer. Mg(2+) is required as a cofactor.

It localises to the cytoplasm. The enzyme catalyses Endonucleolytic cleavage to 5'-phosphomonoester.. Its function is as follows. Endonuclease that specifically degrades the RNA of RNA-DNA hybrids. The sequence is that of Ribonuclease H from Thermus thermophilus (strain ATCC BAA-163 / DSM 7039 / HB27).